Reading from the N-terminus, the 126-residue chain is Holo-[acyl-carrier-protein] synthase (126 aa).

Residues aspartate 9 and glutamate 58 each contribute to the Mg(2+) site.

It belongs to the P-Pant transferase superfamily. AcpS family. Requires Mg(2+) as cofactor.

The protein localises to the cytoplasm. The catalysed reaction is apo-[ACP] + CoA = holo-[ACP] + adenosine 3',5'-bisphosphate + H(+). In terms of biological role, transfers the 4'-phosphopantetheine moiety from coenzyme A to a Ser of acyl-carrier-protein. The protein is Holo-[acyl-carrier-protein] synthase of Yersinia enterocolitica serotype O:8 / biotype 1B (strain NCTC 13174 / 8081).